The sequence spans 549 residues: Longitudinals lacking protein, isoforms H/M/V (549 aa).

Residues Val-32–Gln-97 enclose the BTB domain. 2 disordered regions span residues Leu-115–Leu-200 and Ser-228–Ser-340. Composition is skewed to low complexity over residues Ser-162–Pro-175, Ser-228–Thr-251, Thr-263–Ser-293, and Asn-329–Ser-340.

In terms of tissue distribution, mostly neuronal.

It localises to the nucleus. Its function is as follows. Putative transcription factor required for axon growth and guidance in the central and peripheral nervous systems. Repels CNS axons away from the midline by promoting the expression of the midline repellent sli and its receptor robo. This chain is Longitudinals lacking protein, isoforms H/M/V, found in Drosophila melanogaster (Fruit fly).